Here is a 142-residue protein sequence, read N- to C-terminus: Large ribosomal subunit protein uL11 (142 aa).

The protein belongs to the universal ribosomal protein uL11 family. As to quaternary structure, part of the ribosomal stalk of the 50S ribosomal subunit. Interacts with L10 and the large rRNA to form the base of the stalk. L10 forms an elongated spine to which L12 dimers bind in a sequential fashion forming a multimeric L10(L12)X complex. One or more lysine residues are methylated.

In terms of biological role, forms part of the ribosomal stalk which helps the ribosome interact with GTP-bound translation factors. This is Large ribosomal subunit protein uL11 from Vibrio cholerae serotype O1 (strain ATCC 39541 / Classical Ogawa 395 / O395).